The primary structure comprises 393 residues: Probable hydrolase sll0100 (393 aa).

This sequence belongs to the peptidase M20 family.

The polypeptide is Probable hydrolase sll0100 (Synechocystis sp. (strain ATCC 27184 / PCC 6803 / Kazusa)).